Here is a 213-residue protein sequence, read N- to C-terminus: Pyrrolidone-carboxylate peptidase (213 aa).

Active-site residues include Glu80, Cys143, and His166.

This sequence belongs to the peptidase C15 family. Homotetramer.

It is found in the cytoplasm. It carries out the reaction Release of an N-terminal pyroglutamyl group from a polypeptide, the second amino acid generally not being Pro.. Its function is as follows. Removes 5-oxoproline from various penultimate amino acid residues except L-proline. The sequence is that of Pyrrolidone-carboxylate peptidase from Clavibacter michiganensis subsp. michiganensis (strain NCPPB 382).